Reading from the N-terminus, the 423-residue chain is MEDKRSLSMARCEERNSRGQDHGLERVPFPPQLQSETYLHPADPSPAWDDPGSTGSPNLRLLTEEIAFQPLAEEASFRRPHPDGDVPPQGEDNLLSLPFPQKLWRLVSSNQFSSIWWDDSGACRVINQKLFEKEILKRDVAHKVFATTSIKSFFRQLNLYGFRKRRQCTFRTFTRIFSAKRLVSILNKLEFYCHPYFQRDSPHLLVRMKRRVGVKSAPRHQEEDKPEAAGSCLAPADTEQQDHTSPNENDQVTPQHREPAGPNTQIRSGSAPPATPVMVPDSAVASDNSPVTQPAGEWSEGSQAHVTPVAAVPGPAALPFLYVPGSPTQMNSYGPVVALPTASRSTLAMDTTGLPAPGMLPFCHLWVPVTLVAAGAAQPAASMVMFPHLPALHHHCPHSHRTSQYMPASDGPQAYPDYADQST.

Residues 1-25 (MEDKRSLSMARCEERNSRGQDHGLE) are compositionally biased toward basic and acidic residues. Disordered stretches follow at residues 1–56 (MEDK…STGS), 215–303 (KSAP…EGSQ), and 397–423 (PHSH…DQST). The DNA-binding element occupies 98-282 (PFPQKLWRLV…PATPVMVPDS (185 aa)). Residue Lys215 forms a Glycyl lysine isopeptide (Lys-Gly) (interchain with G-Cter in SUMO1) linkage. A compositionally biased stretch (polar residues) spans 243-254 (HTSPNENDQVTP).

It belongs to the HSF family. In terms of tissue distribution, testis-specific.

The protein localises to the nucleus. It is found in the cytoplasm. This Homo sapiens (Human) protein is Heat shock transcription factor, X-linked (HSFX1).